The following is a 577-amino-acid chain: Aspartate--tRNA ligase (577 aa).

E171 serves as a coordination point for L-aspartate. An aspartate region spans residues 195–198; the sequence is QLFK. Residue R217 participates in L-aspartate binding. ATP contacts are provided by residues 217-219 and Q226; that span reads RDE. An L-aspartate-binding site is contributed by H437. Residue E472 coordinates ATP. R479 is an L-aspartate binding site. ATP is bound at residue 524 to 527; sequence GFDR.

This sequence belongs to the class-II aminoacyl-tRNA synthetase family. Type 1 subfamily. In terms of assembly, homodimer.

Its subcellular location is the cytoplasm. It catalyses the reaction tRNA(Asp) + L-aspartate + ATP = L-aspartyl-tRNA(Asp) + AMP + diphosphate. Its function is as follows. Catalyzes the attachment of L-aspartate to tRNA(Asp) in a two-step reaction: L-aspartate is first activated by ATP to form Asp-AMP and then transferred to the acceptor end of tRNA(Asp). This Deinococcus deserti (strain DSM 17065 / CIP 109153 / LMG 22923 / VCD115) protein is Aspartate--tRNA ligase.